The primary structure comprises 114 residues: Putative antiporter subunit mnhC2 (114 aa).

The next 3 helical transmembrane spans lie at 3–23, 28–48, and 72–92; these read LILL…ILSI, IVIG…SMGT, and AIVL…LVLV.

Belongs to the CPA3 antiporters (TC 2.A.63) subunit C family. May form a heterooligomeric complex that consists of seven subunits: mnhA2, mnhB2, mnhC2, mnhD2, mnhE2, mnhF2 and mnhG2.

It is found in the cell membrane. This chain is Putative antiporter subunit mnhC2 (mnhC2), found in Staphylococcus aureus (strain MRSA252).